The sequence spans 426 residues: Histidine--tRNA ligase (426 aa).

The protein belongs to the class-II aminoacyl-tRNA synthetase family. In terms of assembly, homodimer.

The protein localises to the cytoplasm. The catalysed reaction is tRNA(His) + L-histidine + ATP = L-histidyl-tRNA(His) + AMP + diphosphate + H(+). This Microcystis aeruginosa (strain NIES-843 / IAM M-2473) protein is Histidine--tRNA ligase.